The following is a 1178-amino-acid chain: Pesticidal crystal protein Cry1Ac (1178 aa).

It belongs to the delta endotoxin family.

Promotes colloidosmotic lysis by binding to the midgut epithelial cells of many lepidopteran larvae. The chain is Pesticidal crystal protein Cry1Ac (cry1Ac) from Bacillus thuringiensis subsp. kurstaki.